The sequence spans 354 residues: Neutral protease 2 homolog MEP3 (354 aa).

The first 19 residues, 1 to 19 (MHFTSSLLALVALTTQALA), serve as a signal peptide directing secretion. Positions 20–179 (FPLNDLPKRD…QSAIPKLEKR (160 aa)) are excised as a propeptide. 2 disulfides stabilise this stretch: cysteine 186/cysteine 256 and cysteine 263/cysteine 281. Histidine 305 contacts Zn(2+). Glutamate 306 is a catalytic residue. Zn(2+) is bound by residues histidine 309 and aspartate 320.

The protein belongs to the peptidase M35 family. Requires Zn(2+) as cofactor.

It localises to the secreted. It catalyses the reaction Preferential cleavage of bonds with hydrophobic residues in P1'. Also 3-Asn-|-Gln-4 and 8-Gly-|-Ser-9 bonds in insulin B chain.. Functionally, secreted metalloproteinase that allows assimilation of proteinaceous substrates. Shows high activities on basic nuclear substrates such as histone and protamine. May be involved in virulence. In Coccidioides posadasii (strain C735) (Valley fever fungus), this protein is Neutral protease 2 homolog MEP3 (MEP3).